Consider the following 399-residue polypeptide: Acetate kinase (399 aa).

Position 10 (Asn10) interacts with Mg(2+). Lys17 serves as a coordination point for ATP. Residue Arg91 coordinates substrate. The Proton donor/acceptor role is filled by Asp148. Residues 208–212 (HLGNG), 283–285 (DCR), and 331–335 (GIGEN) contribute to the ATP site. Glu385 contributes to the Mg(2+) binding site.

Belongs to the acetokinase family. Homodimer. Mg(2+) is required as a cofactor. The cofactor is Mn(2+).

Its subcellular location is the cytoplasm. The catalysed reaction is acetate + ATP = acetyl phosphate + ADP. It participates in metabolic intermediate biosynthesis; acetyl-CoA biosynthesis; acetyl-CoA from acetate: step 1/2. Catalyzes the formation of acetyl phosphate from acetate and ATP. Can also catalyze the reverse reaction. This Shewanella oneidensis (strain ATCC 700550 / JCM 31522 / CIP 106686 / LMG 19005 / NCIMB 14063 / MR-1) protein is Acetate kinase.